Here is a 118-residue protein sequence, read N- to C-terminus: UPF0148 protein M1627_1409 (118 aa).

It belongs to the UPF0148 family.

In Saccharolobus islandicus (strain M.16.27) (Sulfolobus islandicus), this protein is UPF0148 protein M1627_1409.